Reading from the N-terminus, the 301-residue chain is Phosphatidylserine decarboxylase proenzyme (301 aa).

Catalysis depends on charge relay system; for autoendoproteolytic cleavage activity residues Asp-115, His-171, and Ser-258. Catalysis depends on Ser-258, which acts as the Schiff-base intermediate with substrate; via pyruvic acid; for decarboxylase activity. Ser-258 is subject to Pyruvic acid (Ser); by autocatalysis.

It belongs to the phosphatidylserine decarboxylase family. PSD-B subfamily. Prokaryotic type II sub-subfamily. As to quaternary structure, heterodimer of a large membrane-associated beta subunit and a small pyruvoyl-containing alpha subunit. The cofactor is pyruvate. In terms of processing, is synthesized initially as an inactive proenzyme. Formation of the active enzyme involves a self-maturation process in which the active site pyruvoyl group is generated from an internal serine residue via an autocatalytic post-translational modification. Two non-identical subunits are generated from the proenzyme in this reaction, and the pyruvate is formed at the N-terminus of the alpha chain, which is derived from the carboxyl end of the proenzyme. The autoendoproteolytic cleavage occurs by a canonical serine protease mechanism, in which the side chain hydroxyl group of the serine supplies its oxygen atom to form the C-terminus of the beta chain, while the remainder of the serine residue undergoes an oxidative deamination to produce ammonia and the pyruvoyl prosthetic group on the alpha chain. During this reaction, the Ser that is part of the protease active site of the proenzyme becomes the pyruvoyl prosthetic group, which constitutes an essential element of the active site of the mature decarboxylase.

The protein localises to the cell membrane. It catalyses the reaction a 1,2-diacyl-sn-glycero-3-phospho-L-serine + H(+) = a 1,2-diacyl-sn-glycero-3-phosphoethanolamine + CO2. It functions in the pathway phospholipid metabolism; phosphatidylethanolamine biosynthesis; phosphatidylethanolamine from CDP-diacylglycerol: step 2/2. Functionally, catalyzes the formation of phosphatidylethanolamine (PtdEtn) from phosphatidylserine (PtdSer). In Chlamydia pneumoniae (Chlamydophila pneumoniae), this protein is Phosphatidylserine decarboxylase proenzyme.